Reading from the N-terminus, the 933-residue chain is MTELKAKGPRAPHVAGGPPSPEVGSPLLCRPAAGPFPGSQTSDTLPEVSAIPISLDGLLFPRPCQGQDPSNEKTQDQQSLSDVEGAYSRAEATRGAGGSSSSPPEKDSGLLDSVLDTLLAPSGPGQSQPSPPACEVTSSWCLFGPELPEDPPAAPATQGVLSPLMSRSGCKAGDSSGTAAAHKVLPRGLSPSRQLLLPASGSPHWSGAPVKPSPQPAAVEVEEEDGSESEESAGPLLKGKPRALGGAAAGGGAAAVPPGAAAGGVALVPKEDSRFSAPRVALVEQDAPMAPGRSPLATTMMDFIHVPILPLNHALLAARTRQLLEDESYDGGAGAASAFAPPRSSPSASSTPVAVGDFPDCAYPPDAEPKDDAYPLYSDFQPPALKIKEEEEGAEASARSPRSYLVAGANPAAFPDFPLGPPPPLPPRAPPSRPGEAAVTAAPASASVSSASSSGSTLECILYKAEGAPPQQGPFAPPPCKAPGASGCLLPRDGLPSTSASAAAAGAAPALYPALGLSGLPQLGYQATVLKEGLPQVYPPYLNYLRPDSEASQSPQYSFESLPQKICLICGDEASGCHYGVLTCGSCKVFFKRAMEGQHNYLCAGRNDCIVDKIRRKNCPACRLRKCCQAGMVLGGRKFKKFNKVRVVRALDAVALPQPVGIPNESQALSQRFSFSPGQDIQLIPPLINLLMSIEPDVIYAGHDNTKPDTSSSLLTSLNQLGERQLLSVVKWSKSLPGFRNLHIDDQITLIQYSWMSLMVFGLGWRSYKHVSGQMLYFAPDLILNEQRMKESSFYSLCLTMWQIPQEFVKLQVSQEEFLCMKVLLLLNTIPLEGLRSQTQFEEMRSSYIRELIKAIGLRQKGVVSSSQRFYQLTKLLDNLHDLVKQLHLYCLNTFIQSRALSVEFPEMMSEVIAAQLPKILAGMVKPLLFHKK.

The tract at residues Met1–Leu164 is AF3; mediates transcriptional activation. The disordered stretch occupies residues Met1 to Val256. Residues Met1–Ile566 form a modulating, Pro-Rich region. Phosphoserine is present on Ser20. The LXXL motif 1 motif lies at Leu55–Leu59. Ser81 carries the post-translational modification Phosphoserine. Positions Leu115–Leu119 match the LXXL motif 2 motif. Phosphoserine occurs at positions 130 and 162. The tract at residues Met165–His305 is mediates transcriptional transrepression. Residues Lys183 to Arg187 carry the Nuclear localization signal motif. Ser190 and Ser213 each carry phosphoserine. A compositionally biased stretch (acidic residues) spans Glu220–Glu231. Over residues Ser232–Gly246 the composition is skewed to low complexity. A Phosphoserine; by MAPK1 modification is found at Ser294. The interval Gly331–Ser378 is disordered. A compositionally biased stretch (low complexity) spans Ala335–Ser350. Ser345 is modified (phosphoserine; by MAPK). A Glycyl lysine isopeptide (Lys-Gly) (interchain with G-Cter in SUMO); alternate cross-link involves residue Lys388. Residue Lys388 forms a Glycyl lysine isopeptide (Lys-Gly) (interchain with G-Cter in ubiquitin); alternate linkage. Phosphoserine; by CDK2 is present on Ser400. The interval Pro415–Ser452 is disordered. Positions Pro418–Arg433 are enriched in pro residues. A compositionally biased stretch (low complexity) spans Pro434 to Ser452. The AF1; mediates transcriptional activation stretch occupies residues Ser456 to Arg546. Lys531 participates in a covalent cross-link: Glycyl lysine isopeptide (Lys-Gly) (interchain with G-Cter in SUMO). NR C4-type zinc fingers lie at residues Cys567–Cys587 and Cys603–Cys627. The segment at residues Cys567–Phe639 is a DNA-binding region (nuclear receptor). The residue at position 676 (Ser676) is a Phosphoserine. The 235-residue stretch at Gln679–Ile913 folds into the NR LBD domain. The tract at residues Leu687–Lys933 is AF2; mediates transcriptional activation. Arg766 provides a ligand contact to progesterone.

The protein belongs to the nuclear hormone receptor family. In terms of assembly, interacts with SMARD1 and UNC45A. Interacts with CUEDC2; the interaction promotes ubiquitination, decreases sumoylation, and represses transcriptional activity. Interacts with PIAS3; the interaction promotes sumoylation of PR in a hormone-dependent manner, inhibits DNA-binding, and alters nuclear export. Interacts with SP1; the interaction requires ligand-induced phosphorylation on Ser-345 by ERK1/2-MAPK. Interacts with PRMT2. Interacts with NCOA2 and NCOA1. Interacts with KLF9. Interacts with GTF2B. Phosphorylated on multiple serine sites. Several of these sites are hormone-dependent. Phosphorylation on Ser-294 is highly hormone-dependent and modulates ubiquitination and sumoylation on Lys-388. Phosphorylation on Ser-102 and Ser-345 also requires induction by hormone. Basal phosphorylation on Ser-81, Ser-162, Ser-190 and Ser-400 is increased in response to progesterone and can be phosphorylated in vitro by the CDK2-A1 complex. Increased levels of phosphorylation on Ser-400 also in the presence of EGF, heregulin, IGF, PMA and FBS. Phosphorylation at this site by CDK2 is ligand-independent, and increases nuclear translocation and transcriptional activity. Phosphorylation at Ser-162 and Ser-294, but not at Ser-190, is impaired during the G(2)/M phase of the cell cycle. Phosphorylation on Ser-345 by ERK1/2 MAPK is required for interaction with SP1. Post-translationally, sumoylation is hormone-dependent and represses transcriptional activity. Sumoylation on all three sites is enhanced by PIAS3. Desumoylated by SENP1. Sumoylation on Lys-388, the main site of sumoylation, is repressed by ubiquitination on the same site, and modulated by phosphorylation at Ser-294. In terms of processing, ubiquitination is hormone-dependent and represses sumoylation on the same site. Promoted by MAPK-mediated phosphorylation on Ser-294. Ubiquitinated by UBR5, leading to its degradation: UBR5 specifically recognizes and binds ligand-bound PGR when it is not associated with coactivators (NCOAs). In presence of NCOAs, the UBR5-degron is not accessible, preventing its ubiquitination and degradation. Palmitoylated by ZDHHC7 and ZDHHC21. Palmitoylation is required for plasma membrane targeting and for rapid intracellular signaling via ERK and AKT kinases and cAMP generation.

It is found in the nucleus. It localises to the cytoplasm. Its function is as follows. The steroid hormones and their receptors are involved in the regulation of eukaryotic gene expression and affect cellular proliferation and differentiation in target tissues. Transcriptional activator of several progesteron-dependent promoters in a variety of cell types. Involved in activation of SRC-dependent MAPK signaling on hormone stimulation. This chain is Progesterone receptor (PGR), found in Pan paniscus (Pygmy chimpanzee).